The sequence spans 735 residues: Catalase-peroxidase (735 aa).

The segment at residues 95–223 (WHSAGTYRTG…LAAVQMGLIY (129 aa)) is a cross-link (tryptophyl-tyrosyl-methioninium (Trp-Tyr) (with M-249)). H96 (proton acceptor) is an active-site residue. Positions 223-249 (YVNPEGPDGVPDPIKSGIDIRETFARM) form a cross-link, tryptophyl-tyrosyl-methioninium (Tyr-Met) (with W-95). Position 264 (H264) interacts with heme b.

This sequence belongs to the peroxidase family. Peroxidase/catalase subfamily. As to quaternary structure, homodimer or homotetramer. It depends on heme b as a cofactor. In terms of processing, formation of the three residue Trp-Tyr-Met cross-link is important for the catalase, but not the peroxidase activity of the enzyme.

It catalyses the reaction H2O2 + AH2 = A + 2 H2O. It carries out the reaction 2 H2O2 = O2 + 2 H2O. Functionally, bifunctional enzyme with both catalase and broad-spectrum peroxidase activity. This Aliarcobacter butzleri (strain RM4018) (Arcobacter butzleri) protein is Catalase-peroxidase.